A 495-amino-acid polypeptide reads, in one-letter code: Galactose-1-phosphate uridylyltransferase (495 aa).

It belongs to the galactose-1-phosphate uridylyltransferase type 2 family.

The protein resides in the cytoplasm. It carries out the reaction alpha-D-galactose 1-phosphate + UDP-alpha-D-glucose = alpha-D-glucose 1-phosphate + UDP-alpha-D-galactose. Its pathway is carbohydrate metabolism; galactose metabolism. The polypeptide is Galactose-1-phosphate uridylyltransferase (Ligilactobacillus salivarius (strain UCC118) (Lactobacillus salivarius)).